The sequence spans 834 residues: MKKNKLTTLALILPITILTPIVIASCTNKTKVKKSSSLDKIASNLKLEYFNNKANTKASSVQKDEIKKPLNLPNDVVFSVKDVFVSHKDQSVLIVKYTLKKGNEIQEYTYEIKGFKSVYEKDKIVNDLSQANEDFKKIVNNIRLKDTFDFKLAAFPNQNYDQLLPSQIYKNYYQGIEIQQHKYQNELDIKIINFLYPDGDFGSANKNGTLKLSLMLTDKKNNQVYYKLLEVSGFKSNPYGVDENGTIPGIGTERLKPKNQDDYFSKTQLQRYEIDNEGYLQILKRQNNDKNWKELRPDLNATVSDIKHFDEKAKNVGQDSYESAAYKGFTLPVYESDGKISGLALAGKDTPKGPSWVDAIGRNQWQIGGLPRTLPNEKYRQEAMQTFSLGILNNDSHKNNTYNKTAGTTWILDYQKTSDNKYPTKWYFATNLHVADAINENTLSINLMRLMDSAQIKTTFRLSNLDENIYNFGFRSKEHGKNLLNHGLKKIFDGRDFLKTKPAEYLINSQKEKYKDVGNFTDFAVFELDFEKLELVNVWKNFLGENNGLVTKYNNYNPQELAKVITSNYANNKNNQIKFLSKSYLSDYSKIDVPLKYRQEDAKTWFKKYDELFALGWPNSTEDFFFKAYVDDDQLKYRTRDNFSLWTNSDYRFFNNLTQQEGGQPAFPPERTERGNYLSYAIGFRSFIQKPGIVDAFIAVPQIGNNLYTSSDNKKYINMGLEYLPKHFAPAGGASGTSVRNQKNELVAIYHAKYDSSKTGLAAAFRSEGYDYQGLYGNYNLPQYDLIYGGGKDQTEKKSYREAMKDIYQNNNIKTALFPDGFDKIPDEFKFNNN.

Residues 1–25 (MKKNKLTTLALILPITILTPIVIAS) form the signal peptide. Cys-26 carries the N-palmitoyl cysteine lipid modification. Cys-26 carries the S-diacylglycerol cysteine lipid modification. In terms of domain architecture, Lipoprotein-associated type-17 spans 143–237 (RLKDTFDFKL…LLEVSGFKSN (95 aa)).

The protein localises to the cell membrane. The sequence is that of Membrane-associated lipoprotein from Ureaplasma parvum serovar 3 (strain ATCC 700970).